Reading from the N-terminus, the 197-residue chain is Putative RING-H2 finger protein ATL71 (197 aa).

A helical membrane pass occupies residues 20-40 (MGGLAYGIGVSIGILMLITTI). The tract at residues 53 to 80 (SASPTTTPRTRRRQRESNGTLPPGQERF) is disordered. An RING-type; atypical zinc finger spans residues 129 to 171 (CSICLADYKKMDMIRVLPDCNHLFHDNCVDPWLRLHPTCPVCR).

This sequence belongs to the RING-type zinc finger family. ATL subfamily.

The protein localises to the membrane. It catalyses the reaction S-ubiquitinyl-[E2 ubiquitin-conjugating enzyme]-L-cysteine + [acceptor protein]-L-lysine = [E2 ubiquitin-conjugating enzyme]-L-cysteine + N(6)-ubiquitinyl-[acceptor protein]-L-lysine.. The protein operates within protein modification; protein ubiquitination. The protein is Putative RING-H2 finger protein ATL71 (ATL71) of Arabidopsis thaliana (Mouse-ear cress).